A 224-amino-acid chain; its full sequence is RNA-free ribonuclease P (224 aa).

This sequence belongs to the HARP family.

It carries out the reaction Endonucleolytic cleavage of RNA, removing 5'-extranucleotides from tRNA precursor.. In terms of biological role, RNA-free RNase P that catalyzes the removal of the 5'-leader sequence from pre-tRNA to produce the mature 5'-terminus. The protein is RNA-free ribonuclease P of Haloarcula marismortui (strain ATCC 43049 / DSM 3752 / JCM 8966 / VKM B-1809) (Halobacterium marismortui).